A 37-amino-acid polypeptide reads, in one-letter code: Esculentin-2JDa (37 aa).

Cys31 and Cys37 are disulfide-bonded.

In terms of tissue distribution, expressed by the skin glands.

It is found in the secreted. Functionally, has antibacterial activity against E.coli and S.aureus strains. In Odorrana jingdongensis (Jingdong frog), this protein is Esculentin-2JDa.